Reading from the N-terminus, the 288-residue chain is Bifunctional protein FolD (288 aa).

Residues 166 to 168 (GAS) and Ile232 contribute to the NADP(+) site.

Belongs to the tetrahydrofolate dehydrogenase/cyclohydrolase family. Homodimer.

It catalyses the reaction (6R)-5,10-methylene-5,6,7,8-tetrahydrofolate + NADP(+) = (6R)-5,10-methenyltetrahydrofolate + NADPH. The catalysed reaction is (6R)-5,10-methenyltetrahydrofolate + H2O = (6R)-10-formyltetrahydrofolate + H(+). Its pathway is one-carbon metabolism; tetrahydrofolate interconversion. Catalyzes the oxidation of 5,10-methylenetetrahydrofolate to 5,10-methenyltetrahydrofolate and then the hydrolysis of 5,10-methenyltetrahydrofolate to 10-formyltetrahydrofolate. In Escherichia fergusonii (strain ATCC 35469 / DSM 13698 / CCUG 18766 / IAM 14443 / JCM 21226 / LMG 7866 / NBRC 102419 / NCTC 12128 / CDC 0568-73), this protein is Bifunctional protein FolD.